The sequence spans 238 residues: Ribonuclease HII (238 aa).

The 186-residue stretch at 12–197 folds into the RNase H type-2 domain; that stretch reads GIVAGVDEAG…VLELLTDDLL (186 aa). A divalent metal cation contacts are provided by Asp-18, Glu-19, and Asp-107.

The protein belongs to the RNase HII family. Requires Mn(2+) as cofactor. Mg(2+) serves as cofactor.

It localises to the cytoplasm. It carries out the reaction Endonucleolytic cleavage to 5'-phosphomonoester.. Its function is as follows. Endonuclease that specifically degrades the RNA of RNA-DNA hybrids. This chain is Ribonuclease HII (rnhB), found in Thermotoga maritima (strain ATCC 43589 / DSM 3109 / JCM 10099 / NBRC 100826 / MSB8).